We begin with the raw amino-acid sequence, 246 residues long: Aquaporin SIP1-1 (246 aa).

The next 2 membrane-spanning stretches (helical) occupy residues 13-33 and 45-65; these read AAVTFLWVLCVSTLGASTAAV and YALLVTVSLLSVLLFAFNLLC. Residues 74 to 76 carry the NPA 1 motif; it reads NPT. 3 helical membrane passes run 95–115, 139–159, and 166–186; these read FPLALRFPAQAAGAVGGAMAI, GAAAELVLTFVITLAVLWIIV, and IVKTWMLSISTVCLVLTGAAY. An NPA 2 motif is present at residues 192-194; that stretch reads NPA. Residues 214-234 form a helical membrane-spanning segment; it reads VYWICPFVGAVLAAWVFRAVF.

The protein belongs to the MIP/aquaporin (TC 1.A.8) family. SIP (TC 1.A.8.10) subfamily. As to expression, expressed in roots, leaves and anthers.

It localises to the membrane. Functionally, aquaporins facilitate the transport of water and small neutral solutes across cell membranes. The sequence is that of Aquaporin SIP1-1 (SIP1-1) from Oryza sativa subsp. japonica (Rice).